Reading from the N-terminus, the 422-residue chain is Protein FAM53B (422 aa).

Ser-118, Ser-167, Ser-169, Ser-179, Ser-212, and Ser-268 each carry phosphoserine. The segment covering 245–268 (SANSTPASTPELARRSSGLSRSRS) has biased composition (low complexity). Residues 245 to 269 (SANSTPASTPELARRSSGLSRSRSQ) are disordered. The short motif at 281-284 (KRRR) is the Nuclear localization signal element.

This sequence belongs to the FAM53 family. As to quaternary structure, interacts with CTNNB1. In terms of tissue distribution, detected in skeletal muscle, kidney, spleen, thyroid, testis, ovary, small intestine, colon and peripheral blood.

The protein localises to the nucleus. Functionally, acts as a regulator of Wnt signaling pathway by regulating beta-catenin (CTNNB1) nuclear localization. This is Protein FAM53B from Homo sapiens (Human).